Consider the following 264-residue polypeptide: S-adenosylmethionine decarboxylase proenzyme (264 aa).

Ser-112 serves as the catalytic Schiff-base intermediate with substrate; via pyruvic acid. Ser-112 is subject to Pyruvic acid (Ser); by autocatalysis. His-117 (proton acceptor; for processing activity) is an active-site residue. The Proton donor; for catalytic activity role is filled by Cys-140.

Belongs to the prokaryotic AdoMetDC family. Type 2 subfamily. As to quaternary structure, heterooctamer of four alpha and four beta chains arranged as a tetramer of alpha/beta heterodimers. Pyruvate is required as a cofactor. Post-translationally, is synthesized initially as an inactive proenzyme. Formation of the active enzyme involves a self-maturation process in which the active site pyruvoyl group is generated from an internal serine residue via an autocatalytic post-translational modification. Two non-identical subunits are generated from the proenzyme in this reaction, and the pyruvate is formed at the N-terminus of the alpha chain, which is derived from the carboxyl end of the proenzyme. The post-translation cleavage follows an unusual pathway, termed non-hydrolytic serinolysis, in which the side chain hydroxyl group of the serine supplies its oxygen atom to form the C-terminus of the beta chain, while the remainder of the serine residue undergoes an oxidative deamination to produce ammonia and the pyruvoyl group blocking the N-terminus of the alpha chain.

It catalyses the reaction S-adenosyl-L-methionine + H(+) = S-adenosyl 3-(methylsulfanyl)propylamine + CO2. The protein operates within amine and polyamine biosynthesis; S-adenosylmethioninamine biosynthesis; S-adenosylmethioninamine from S-adenosyl-L-methionine: step 1/1. In terms of biological role, catalyzes the decarboxylation of S-adenosylmethionine to S-adenosylmethioninamine (dcAdoMet), the propylamine donor required for the synthesis of the polyamines spermine and spermidine from the diamine putrescine. This Salmonella choleraesuis (strain SC-B67) protein is S-adenosylmethionine decarboxylase proenzyme.